The sequence spans 308 residues: Glutaminase 2 (308 aa).

Serine 66, asparagine 117, glutamate 161, asparagine 168, tyrosine 192, tyrosine 244, and valine 262 together coordinate substrate.

This sequence belongs to the glutaminase family. In terms of assembly, homotetramer.

The enzyme catalyses L-glutamine + H2O = L-glutamate + NH4(+). In Shigella flexneri, this protein is Glutaminase 2.